The sequence spans 750 residues: Tegument protein UL46 homolog (750 aa).

4 disordered regions span residues 437–484, 525–593, 610–669, and 692–750; these read FCCP…SPRT, QRSD…DYMR, YTPY…EVVY, and SASR…VSSL. A compositionally biased stretch (polar residues) spans 465-484; it reads LRSSRQLPTSPPSNIVSPRT. The segment covering 528–540 has biased composition (low complexity); it reads DSSSSDNSTCSST. The span at 541–553 shows a compositional bias: polar residues; that stretch reads ETQYITLPSTPSP. 2 stretches are compositionally biased toward basic and acidic residues: residues 710-727 and 739-750; these read VCRE…DGFI and KHPDQTERVSSL.

Belongs to the herpesviridae HHV-1 VP11/12 protein family.

It is found in the virion tegument. The protein localises to the host cell membrane. Its function is as follows. Modulates alpha trans-inducing factor-dependent activation of alpha genes. The chain is Tegument protein UL46 homolog from Equine herpesvirus 1 (strain V592) (EHV-1).